The following is a 102-amino-acid chain: Antitoxin VapB46 (102 aa).

The protein belongs to the phD/YefM antitoxin family.

Functionally, antitoxin component of a type II toxin-antitoxin (TA) system. Neutralizes the effect of cognate toxin VapC46. This Mycobacterium tuberculosis (strain CDC 1551 / Oshkosh) protein is Antitoxin VapB46 (vapB46).